A 320-amino-acid polypeptide reads, in one-letter code: Malate dehydrogenase (320 aa).

Residues 8 to 13 (GAGQIG) and Asp-33 contribute to the NAD(+) site. Substrate is bound by residues Arg-82 and Arg-88. Residues Asn-95 and 118-120 (ITN) each bind NAD(+). Asn-120 and Arg-151 together coordinate substrate. His-175 functions as the Proton acceptor in the catalytic mechanism.

It belongs to the LDH/MDH superfamily. MDH type 3 family.

The catalysed reaction is (S)-malate + NAD(+) = oxaloacetate + NADH + H(+). Functionally, catalyzes the reversible oxidation of malate to oxaloacetate. This Pelagibacter ubique (strain HTCC1062) protein is Malate dehydrogenase.